The following is a 98-amino-acid chain: DNA-binding protein Fis (98 aa).

The segment at residues 74–93 (QTRAATMLGINRGTLRKKLK) is a DNA-binding region (H-T-H motif).

This sequence belongs to the transcriptional regulatory Fis family. As to quaternary structure, homodimer.

Activates ribosomal RNA transcription. Plays a direct role in upstream activation of rRNA promoters. This chain is DNA-binding protein Fis, found in Mannheimia haemolytica (Pasteurella haemolytica).